Reading from the N-terminus, the 80-residue chain is Cell division protein ZapB (80 aa).

The stretch at phenylalanine 3 to glutamine 80 forms a coiled coil.

Belongs to the ZapB family. Homodimer. The ends of the coiled-coil dimer bind to each other, forming polymers. Interacts with FtsZ.

It is found in the cytoplasm. In terms of biological role, non-essential, abundant cell division factor that is required for proper Z-ring formation. It is recruited early to the divisome by direct interaction with FtsZ, stimulating Z-ring assembly and thereby promoting cell division earlier in the cell cycle. Its recruitment to the Z-ring requires functional FtsA or ZipA. The sequence is that of Cell division protein ZapB from Photorhabdus laumondii subsp. laumondii (strain DSM 15139 / CIP 105565 / TT01) (Photorhabdus luminescens subsp. laumondii).